The chain runs to 401 residues: Argininosuccinate synthase (401 aa).

10 to 18 (AYSGGVDTS) provides a ligand contact to ATP. Tyr89 is a binding site for L-citrulline. Gly119 contacts ATP. The L-aspartate site is built by Thr121, Asn125, and Asp126. Asn125 provides a ligand contact to L-citrulline. L-citrulline is bound by residues Arg129, Ser177, Ser186, Glu262, and Tyr274.

It belongs to the argininosuccinate synthase family. Type 1 subfamily. As to quaternary structure, homotetramer.

Its subcellular location is the cytoplasm. It catalyses the reaction L-citrulline + L-aspartate + ATP = 2-(N(omega)-L-arginino)succinate + AMP + diphosphate + H(+). It participates in amino-acid biosynthesis; L-arginine biosynthesis; L-arginine from L-ornithine and carbamoyl phosphate: step 2/3. This is Argininosuccinate synthase from Thermosynechococcus vestitus (strain NIES-2133 / IAM M-273 / BP-1).